We begin with the raw amino-acid sequence, 248 residues long: 3-deoxy-manno-octulosonate cytidylyltransferase (248 aa).

Belongs to the KdsB family.

The protein resides in the cytoplasm. The enzyme catalyses 3-deoxy-alpha-D-manno-oct-2-ulosonate + CTP = CMP-3-deoxy-beta-D-manno-octulosonate + diphosphate. It participates in nucleotide-sugar biosynthesis; CMP-3-deoxy-D-manno-octulosonate biosynthesis; CMP-3-deoxy-D-manno-octulosonate from 3-deoxy-D-manno-octulosonate and CTP: step 1/1. Its pathway is bacterial outer membrane biogenesis; lipopolysaccharide biosynthesis. Its function is as follows. Activates KDO (a required 8-carbon sugar) for incorporation into bacterial lipopolysaccharide in Gram-negative bacteria. This Escherichia fergusonii (strain ATCC 35469 / DSM 13698 / CCUG 18766 / IAM 14443 / JCM 21226 / LMG 7866 / NBRC 102419 / NCTC 12128 / CDC 0568-73) protein is 3-deoxy-manno-octulosonate cytidylyltransferase.